The chain runs to 349 residues: UDP-N-acetylenolpyruvoylglucosamine reductase (349 aa).

The region spanning 26–197 (FDARARVAAR…VAVTFRLPKA (172 aa)) is the FAD-binding PCMH-type domain. Residue arginine 173 is part of the active site. Catalysis depends on serine 249, which acts as the Proton donor. Glutamate 345 is a catalytic residue.

The protein belongs to the MurB family. Requires FAD as cofactor.

Its subcellular location is the cytoplasm. The enzyme catalyses UDP-N-acetyl-alpha-D-muramate + NADP(+) = UDP-N-acetyl-3-O-(1-carboxyvinyl)-alpha-D-glucosamine + NADPH + H(+). It functions in the pathway cell wall biogenesis; peptidoglycan biosynthesis. Cell wall formation. In Burkholderia pseudomallei (strain K96243), this protein is UDP-N-acetylenolpyruvoylglucosamine reductase.